A 73-amino-acid polypeptide reads, in one-letter code: Serine rich endogenous peptide 1 (73 aa).

The N-terminal stretch at 1–28 (MGMSGSSGLVHVLMLLLLLSILFHHTES) is a signal peptide. Positions 48–73 (YKPNTAVETPPSRSRRGGGGQNTGAD) are disordered. Positions 53–67 (AVETPPSRSRRGGGG) match the SCOOP motif motif. The SxS motif essential for MIK2 binding motif lies at 59–61 (SRS). A compositionally biased stretch (gly residues) spans 64–73 (GGGGQNTGAD).

It belongs to the serine rich endogenous peptide (SCOOP) phytocytokine family. Interacts with MIK2 (via extracellular leucine-rich repeat domain); this interaction triggers the formation of complex between MIK2 and the BAK1/SERK3 and SERK4 coreceptors, and subsequent BAK1 activation by phosphorylation. Mostly expressed in leaves and flowers, and, to a lower extent, in seedlings shoots.

It localises to the cell membrane. Its subcellular location is the secreted. It is found in the extracellular space. The protein resides in the apoplast. Its function is as follows. Brassicaceae-specific phytocytokine (plant endogenous peptide released into the apoplast) perceived by MIK2 in a BAK1/SERK3 and SERK4 coreceptors-dependent manner, that modulates various physiological and antimicrobial processes including growth prevention and reactive oxygen species (ROS) response regulation. This is Serine rich endogenous peptide 1 from Arabidopsis thaliana (Mouse-ear cress).